A 104-amino-acid chain; its full sequence is Large ribosomal subunit protein uL24 (104 aa).

The protein belongs to the universal ribosomal protein uL24 family. As to quaternary structure, part of the 50S ribosomal subunit.

Its function is as follows. One of two assembly initiator proteins, it binds directly to the 5'-end of the 23S rRNA, where it nucleates assembly of the 50S subunit. Functionally, one of the proteins that surrounds the polypeptide exit tunnel on the outside of the subunit. The sequence is that of Large ribosomal subunit protein uL24 from Caulobacter vibrioides (strain ATCC 19089 / CIP 103742 / CB 15) (Caulobacter crescentus).